The primary structure comprises 319 residues: NADH-ubiquinone oxidoreductase chain 1 (319 aa).

A run of 8 helical transmembrane segments spans residues 3–23, 74–94, 106–126, 149–169, 175–195, 226–246, 254–274, and 294–314; these read LITL…AMAF, LFLL…IPLP, ILFI…SGWA, TLGL…LTTF, AVWL…STLA, LFFL…TILF, LTIN…FLWV, and FLPL…SMAG.

Belongs to the complex I subunit 1 family.

It is found in the mitochondrion inner membrane. The enzyme catalyses a ubiquinone + NADH + 5 H(+)(in) = a ubiquinol + NAD(+) + 4 H(+)(out). Core subunit of the mitochondrial membrane respiratory chain NADH dehydrogenase (Complex I) that is believed to belong to the minimal assembly required for catalysis. Complex I functions in the transfer of electrons from NADH to the respiratory chain. The immediate electron acceptor for the enzyme is believed to be ubiquinone. This is NADH-ubiquinone oxidoreductase chain 1 (MT-ND1) from Polypterus ornatipinnis (Ornate bichir).